We begin with the raw amino-acid sequence, 433 residues long: Cell division protein FtsZ homolog 1, chloroplastic (433 aa).

A chloroplast-targeting transit peptide spans 1 to 66 (MAIIPLAQLN…TRSKSMRLRC (66 aa)). Ser-67 bears the N-acetylserine mark. Residues 83-87 (GGGNN), 170-172 (GTG), Glu-201, Arg-205, and Asp-249 contribute to the GTP site. The segment at 399–433 (GSSGQQENKGMSLPHQKQSPSTISTKSSSPRRLFF) is disordered. Residues 414-433 (QKQSPSTISTKSSSPRRLFF) show a composition bias toward low complexity.

This sequence belongs to the FtsZ family. In terms of assembly, aggregates to form a contractile ring-like structure; contraction of the ring was accompanied by an increase in the filament turnover rate. This aggregation is regulated in midchloroplast stroma by MIND1 (repressor) and MINE1 (promoter). Self-interacts and binds to FTSZ2-1 in heteromers to form two morphologically distinct types of filaments, termed type-I (smooth filaments) and type-II (rough filaments), in a GTP-dependent manner. Interacts with ARC3. Part of a complex made of ARC3, ARC6, FTSZ1 and FTSZ2. In terms of tissue distribution, in pollen grain, restricted to plastids of vegetative cells. Also present in pollen tubes plastids.

The protein resides in the plastid. It localises to the chloroplast stroma. It is found in the chloroplast thylakoid membrane. Exhibits GTPase activity. Component of the plastid division machinery that forms a contractile ring at the division site. Required for plastid division in a dose-dependent manner. Involved in epidermal plastids division in a MINE1-dependent manner. Involved in blue light-induced chloroplast movements. May regulate thylakoid development. In the vegetative shoot apex, at the shoot apical meristem (SAM), where the proplastid-to-chloroplast transition takes place, contributes equally with FTSZ2-1 in the L2 layer to plastid division. The sequence is that of Cell division protein FtsZ homolog 1, chloroplastic from Arabidopsis thaliana (Mouse-ear cress).